A 172-amino-acid chain; its full sequence is Large ribosomal subunit protein uL10 (172 aa).

This sequence belongs to the universal ribosomal protein uL10 family. In terms of assembly, part of the ribosomal stalk of the 50S ribosomal subunit. The N-terminus interacts with L11 and the large rRNA to form the base of the stalk. The C-terminus forms an elongated spine to which L12 dimers bind in a sequential fashion forming a multimeric L10(L12)X complex.

Functionally, forms part of the ribosomal stalk, playing a central role in the interaction of the ribosome with GTP-bound translation factors. This Chelativorans sp. (strain BNC1) protein is Large ribosomal subunit protein uL10.